The sequence spans 151 residues: Austinoid biosynthesis clusters protein F (151 aa).

This sequence belongs to the trt14 isomerase family. In terms of assembly, homodimer.

It participates in secondary metabolite biosynthesis; terpenoid biosynthesis. Part of the gene cluster B that mediates the biosynthesis of the fungal meroterpenoid acetoxydehydroaustin. The first step of the pathway is the synthesis of 3,5-dimethylorsellinic acid by the polyketide synthase ausA. 3,5-dimethylorsellinic acid is then prenylated by the polyprenyl transferase ausN. Further epoxidation by the FAD-dependent monooxygenase ausM and cyclization by the probable terpene cyclase ausL lead to the formation of protoaustinoid A. Protoaustinoid A is then oxidized to spiro-lactone preaustinoid A3 by the combined action of the FAD-binding monooxygenases ausB and ausC, and the dioxygenase ausE. Acid-catalyzed keto-rearrangement and ring contraction of the tetraketide portion of preaustinoid A3 by ausJ lead to the formation of preaustinoid A4. The aldo-keto reductase ausK, with the help of ausH, is involved in the next step by transforming preaustinoid A4 into isoaustinone which is in turn hydroxylated by the P450 monooxygenase ausI to form austinolide. The cytochrome P450 monooxygenase ausG then modifies austinolide to austinol. Austinol is further acetylated to austin by the O-acetyltransferase ausP, which spontaneously changes to dehydroaustin. The cytochrome P450 monooxygenase then converts dehydroaustin is into 7-dehydrodehydroaustin. The hydroxylation catalyzed by ausR permits the second O-acetyltransferase ausQ to add an additional acetyl group to the molecule, leading to the formation of acetoxydehydroaustin. Due to genetic rearrangements of the clusters and the subsequent loss of some enzymes, the end product of the Penicillium brasilianum austinoid biosynthesis clusters is acetoxydehydroaustin. The sequence is that of Austinoid biosynthesis clusters protein F from Penicillium brasilianum.